The sequence spans 478 residues: BTB/POZ domain-containing protein 17 (478 aa).

The signal sequence occupies residues 1 to 28 (MLRKGSCKPGSWGSFWAILALVGLVTRA). 4 N-linked (GlcNAc...) asparagine glycosylation sites follow: N61, N100, N195, and N307. Residues 63 to 132 (SDVILRVQAV…LYCGELTVLL (70 aa)) form the BTB domain. The BACK domain occupies 169–269 (AVGWYHYAVS…IPPAQLFQLQ (101 aa)).

It localises to the secreted. The polypeptide is BTB/POZ domain-containing protein 17 (Btbd17) (Mus musculus (Mouse)).